Reading from the N-terminus, the 634-residue chain is UPF0329 protein ECU11_2090 (634 aa).

2 stretches are compositionally biased toward basic and acidic residues: residues 354–365 (REEREKREESKG) and 397–407 (GESKEEDRGEE). A disordered region spans residues 354–438 (REEREKREES…KGSGEKRISE (85 aa)). Positions 408–417 (GGVEAEDPLE) are enriched in acidic residues.

The protein belongs to the UPF0329 family.

This chain is UPF0329 protein ECU11_2090, found in Encephalitozoon cuniculi (strain GB-M1) (Microsporidian parasite).